The following is a 333-amino-acid chain: Transcription factor TGA2.2 (333 aa).

Positions M1–L14 are enriched in polar residues. Residues M1–Q48 are disordered. Residues D37–Q48 show a composition bias toward basic and acidic residues. A bZIP domain is found at D47–K91. The interval K49 to K69 is basic motif. The interval L75–I89 is leucine-zipper. Residues A114 to R330 form the DOG1 domain.

The protein belongs to the bZIP family. As to quaternary structure, interacts with NPR1/NH1. Interacts with NPR3/NH3.

The protein resides in the nucleus. Its function is as follows. Transcriptional regulator involved in defense response. The polypeptide is Transcription factor TGA2.2 (Oryza sativa subsp. japonica (Rice)).